The chain runs to 276 residues: Hemin import ATP-binding protein HmuV (276 aa).

Residues 2 to 259 (LTAHHLDVAR…AHIAQCYGFA (258 aa)) enclose the ABC transporter domain. 34 to 41 (GRNGAGKS) is a binding site for ATP.

This sequence belongs to the ABC transporter superfamily. Heme (hemin) importer (TC 3.A.1.14.5) family. In terms of assembly, the complex is composed of two ATP-binding proteins (HmuV), two transmembrane proteins (HmuU) and a solute-binding protein (HmuT).

It localises to the cell inner membrane. Functionally, part of the ABC transporter complex HmuTUV involved in hemin import. Responsible for energy coupling to the transport system. In Burkholderia cenocepacia (strain HI2424), this protein is Hemin import ATP-binding protein HmuV.